Here is a 723-residue protein sequence, read N- to C-terminus: Nuclear intron maturase 3, mitochondrial (723 aa).

The transit peptide at 1–26 (MVLRLRVHSFYNRGISFLVSSSLRNL) directs the protein to the mitochondrion. The interval 532–597 (VSAPEELVRK…HYTKDLRVSD (66 aa)) is intron maturase type-2; degenerate. The THAP-type zinc-finger motif lies at 646–700 (CAASFCERSDTIMHRVHLLQNRLHINPLDEEKWVPGMGTIHSALNRKCLPLCSTH).

Belongs to the plant nuclear intron maturase (nMat) family.

It localises to the mitochondrion. In terms of biological role, nuclear-encoded maturase required for splicing of group-II introns in mitochondria. Necessary for mitochondrial biogenesis during early developmental stages. The protein is Nuclear intron maturase 3, mitochondrial of Arabidopsis thaliana (Mouse-ear cress).